Reading from the N-terminus, the 276-residue chain is Elongation factor Ts, mitochondrial (276 aa).

Belongs to the EF-Ts family.

The protein localises to the mitochondrion. Its function is as follows. Associates with the EF-Tu.GDP complex and induces the exchange of GDP to GTP. It remains bound to the aminoacyl-tRNA.EF-Tu.GTP complex up to the GTP hydrolysis stage on the ribosome. This is Elongation factor Ts, mitochondrial from Leishmania infantum.